A 186-amino-acid chain; its full sequence is Casparian strip membrane protein 3 (186 aa).

The Cytoplasmic segment spans residues 1–26; the sequence is MKGSSEHGETSKAAPLGRGGVSKGVS. The helical transmembrane segment at 27-47 threads the bilayer; the sequence is VLDLILRFIAIIGTLASAIAM. Residues 48-74 are Extracellular-facing; that stretch reads GTTNETLPFFTQFIRFKAQYSDLPTLT. The N-linked (GlcNAc...) asparagine glycan is linked to Asn-51. A helical transmembrane segment spans residues 75-95; it reads FFVVANSIVCAYLILSLPLSI. The Cytoplasmic portion of the chain corresponds to 96–107; it reads VHIIRSRAKYSR. Residues 108–128 traverse the membrane as a helical segment; it reads LLLIFLDAAMLALVTAGASAA. Topologically, residues 129-161 are extracellular; it reads AAIVYLAHKGNVRANWLAICQQFDSFCERISGS. A helical transmembrane segment spans residues 162 to 182; sequence LIGSFGAMVMLILLILLSAIA. Over 183-186 the chain is Cytoplasmic; the sequence is LARR.

It belongs to the Casparian strip membrane proteins (CASP) family. As to quaternary structure, homodimer and heterodimers.

Its subcellular location is the cell membrane. In terms of biological role, regulates membrane-cell wall junctions and localized cell wall deposition. Required for establishment of the Casparian strip membrane domain (CSD) and the subsequent formation of Casparian strips, a cell wall modification of the root endodermis that determines an apoplastic barrier between the intraorganismal apoplasm and the extraorganismal apoplasm and prevents lateral diffusion. This chain is Casparian strip membrane protein 3, found in Sorghum bicolor (Sorghum).